A 510-amino-acid chain; its full sequence is Proline--tRNA ligase 2 (510 aa).

Belongs to the class-II aminoacyl-tRNA synthetase family. ProS type 3 subfamily. As to quaternary structure, homodimer.

The protein localises to the cytoplasm. The catalysed reaction is tRNA(Pro) + L-proline + ATP = L-prolyl-tRNA(Pro) + AMP + diphosphate. Its function is as follows. Catalyzes the attachment of proline to tRNA(Pro) in a two-step reaction: proline is first activated by ATP to form Pro-AMP and then transferred to the acceptor end of tRNA(Pro). The chain is Proline--tRNA ligase 2 from Anaeromyxobacter dehalogenans (strain 2CP-C).